The sequence spans 118 residues: Ribulose bisphosphate carboxylase small subunit 2 (118 aa).

The protein belongs to the RuBisCO small chain family. As to quaternary structure, heterohexadecamer of 8 large and 8 small subunits.

Functionally, ruBisCO catalyzes two reactions: the carboxylation of D-ribulose 1,5-bisphosphate, the primary event in carbon dioxide fixation, as well as the oxidative fragmentation of the pentose substrate. Both reactions occur simultaneously and in competition at the same active site. Although the small subunit is not catalytic it is essential for maximal activity. This chain is Ribulose bisphosphate carboxylase small subunit 2, found in Acidithiobacillus ferrooxidans (Thiobacillus ferrooxidans).